Here is a 64-residue protein sequence, read N- to C-terminus: Conotoxin Pn-B01122 (64 aa).

The first 22 residues, 1–22, serve as a signal peptide directing secretion; the sequence is MRCLPVFVILLLLIASAPSVDA. Residues 23 to 48 constitute a propeptide that is removed on maturation; that stretch reads RPKTKDDIPLVSFQDNAKRALQILSN.

The protein belongs to the conotoxin T superfamily. Post-translationally, contains 2 disulfide bonds that can be either 'C1-C3, C2-C4' or 'C1-C4, C2-C3', since these disulfide connectivities have been observed for conotoxins with cysteine framework V (for examples, see AC P0DQQ7 and AC P81755). In terms of tissue distribution, expressed by the venom duct.

Its subcellular location is the secreted. The protein is Conotoxin Pn-B01122 of Conus pennaceus (Feathered cone).